The chain runs to 261 residues: Pimeloyl-[acyl-carrier protein] methyl ester esterase (261 aa).

One can recognise an AB hydrolase-1 domain in the interval 15–243 (HLVLLHGWGL…AAHAPFISHP (229 aa)). Substrate contacts are provided by residues tryptophan 22, 83 to 84 (SL), and 144 to 148 (FLALQ). The Nucleophile role is filled by serine 83. Active-site residues include aspartate 208 and histidine 236. Substrate is bound at residue histidine 236.

Belongs to the AB hydrolase superfamily. Carboxylesterase BioH family. Monomer.

Its subcellular location is the cytoplasm. It catalyses the reaction 6-carboxyhexanoyl-[ACP] methyl ester + H2O = 6-carboxyhexanoyl-[ACP] + methanol + H(+). Its pathway is cofactor biosynthesis; biotin biosynthesis. The physiological role of BioH is to remove the methyl group introduced by BioC when the pimeloyl moiety is complete. It allows to synthesize pimeloyl-ACP via the fatty acid synthetic pathway through the hydrolysis of the ester bonds of pimeloyl-ACP esters. The chain is Pimeloyl-[acyl-carrier protein] methyl ester esterase from Proteus mirabilis (strain HI4320).